Here is a 956-residue protein sequence, read N- to C-terminus: Valine--tRNA ligase (956 aa).

Positions 69 to 79 (PNITGVLHMGH) match the 'HIGH' region motif. The 'KMSKS' region signature appears at 566-570 (KMSKS). Residue lysine 569 participates in ATP binding. The stretch at 885-911 (LCARLQKAWQKARQKVQQVERKLADAQ) forms a coiled coil.

It belongs to the class-I aminoacyl-tRNA synthetase family. ValS type 1 subfamily. As to quaternary structure, monomer.

The protein resides in the cytoplasm. The enzyme catalyses tRNA(Val) + L-valine + ATP = L-valyl-tRNA(Val) + AMP + diphosphate. In terms of biological role, catalyzes the attachment of valine to tRNA(Val). As ValRS can inadvertently accommodate and process structurally similar amino acids such as threonine, to avoid such errors, it has a 'posttransfer' editing activity that hydrolyzes mischarged Thr-tRNA(Val) in a tRNA-dependent manner. The chain is Valine--tRNA ligase from Treponema pallidum (strain Nichols).